Here is a 259-residue protein sequence, read N- to C-terminus: Isoprenyl transferase (259 aa).

Residue Asp-30 is part of the active site. Residue Asp-30 coordinates Mg(2+). Substrate is bound by residues 31–34, Trp-35, Arg-43, His-47, and 75–77; these read GNGR and STE. Asn-78 acts as the Proton acceptor in catalysis. Substrate contacts are provided by residues Trp-79, Arg-81, Arg-198, and 204–206; that span reads RIS. A Mg(2+)-binding site is contributed by Glu-217.

This sequence belongs to the UPP synthase family. Homodimer. Mg(2+) serves as cofactor.

Its function is as follows. Catalyzes the condensation of isopentenyl diphosphate (IPP) with allylic pyrophosphates generating different type of terpenoids. In Caulobacter vibrioides (strain ATCC 19089 / CIP 103742 / CB 15) (Caulobacter crescentus), this protein is Isoprenyl transferase.